The sequence spans 754 residues: RNA exonuclease 5 (754 aa).

Residues 1-36 (MELEEEENPRKRKETPNSALTTELDRPSWDVQDPEP) form a disordered region. Residues 222 to 370 (LFGLDCEVCL…EDARTALELV (149 aa)) form the Exonuclease domain. 2 consecutive RRM domains span residues 488 to 562 (STIY…RLLT) and 583 to 662 (GTIY…RHLQ).

This is RNA exonuclease 5 (Rexo5) from Rattus norvegicus (Rat).